Reading from the N-terminus, the 314-residue chain is Tyrosine recombinase XerC (314 aa).

In terms of domain architecture, Core-binding (CB) spans 1–85 (MNEQVEAFLR…AVKSFFTFLT (85 aa)). The 186-residue stretch at 106–291 (DLPRALTPRQ…NHESSHTPHA (186 aa)) folds into the Tyr recombinase domain. Residues Arg-147, Lys-171, His-243, Arg-246, and His-269 contribute to the active site. The active-site O-(3'-phospho-DNA)-tyrosine intermediate is Tyr-278. A disordered region spans residues 284 to 314 (ESSHTPHAHPAPRASEVNGVRDEQALVPEEK). Positions 302–314 (GVRDEQALVPEEK) are enriched in basic and acidic residues.

This sequence belongs to the 'phage' integrase family. XerC subfamily. In terms of assembly, forms a cyclic heterotetrameric complex composed of two molecules of XerC and two molecules of XerD.

Its subcellular location is the cytoplasm. In terms of biological role, site-specific tyrosine recombinase, which acts by catalyzing the cutting and rejoining of the recombining DNA molecules. The XerC-XerD complex is essential to convert dimers of the bacterial chromosome into monomers to permit their segregation at cell division. It also contributes to the segregational stability of plasmids. The protein is Tyrosine recombinase XerC of Roseiflexus castenholzii (strain DSM 13941 / HLO8).